The primary structure comprises 1147 residues: MDAVNAFNQELFSLMDMKPPISRAKMILITKAAIKAIKLYKHVVQIVEKFIKKCKPEYKVPGLYVIDSIVRQSRHQFGTDKDVFGPRFSKNITATFQYLYLCPSEDKSKIVRVLNLWQKNGVFKIEIIQPLLDMAAGTSNAAPVAENVTNNEGSPPPPVKVSSEPPTQATPNSVPAVPQLPSSDAFAAVAQLFQTTQGQQLQQILQTFQQPPKPQSPALDNAVMAQVQAITAQLKTTPTQPSEQKAAFPPPEQKTAFDKKLLDRFDYDDEPEAVEESKKEDTTAVTTTAPAAAVPPAPTATVPAAAAPAAASPPPPQAPFGFPGDGMQQPAYTQHQNMDQFQPRMMGIQQDPMHHQVPLPPNGQMPGFGLLPTPPFPPMAQPVIPPTPPVQQPFQASFQAQNEPLTQKPHQQEMEVEQPCIQEVKRHMSDNRKSRSRSASRSPKRRRSRSGSRSRRSRHRRSRSRSRDRRRHSPRSRSQERRDREKERERRQKGLPQVKPETASVCSTTLWVGQLDKRTTQQDVASLLEEFGPIESINMIPPRGCAYIVMVHRQDAYRALQKLSRGNYKVNQKSIKIAWALNKGIKADYKQYWDVELGVTYIPWDKVKPEELESFCEGGMLDSDTLNPDWKGIPKKPENEVAQNGGAETSHTEPVSPIPKPLPVPVPPIPVPAPITVPPPQVPPHQPGPPVVGALQPPAFTPPLGIPPPGFGPGVPPPPPPPPFLRPGFNPMHLPPGFLPPGPPPPITPPVSIPPPHTPPISIPNSTIAGINEDTTKDLSIGNPIPTVVSGARGNAESGDSVKMYGSAVPPAAPTNLPTPPVTQPVSLLGTQGVAPGPVIGLQAPSTGLLGARPGLIPLQRPPGMPPPHLQRFPLMPPRPMPPHMMHRGPPPGPGGFAMPPPHGMKGPFPPHGPFVRPGGMPGLGGPGPGPGGPEDRDGRQQPPQQPQQQPQPQAPQQPQQQQQQQPPPSQQPPPTQQQPQQFRNDNRQQFNSGRDQERFGRRSFGNRVENDRERYGNRNDDRDNSNRDRREWGRRSPDRDRHRDLEERNRRSSGHRDRERDSRDRESRREKEEARGKEKPEVTDRAGGNKTVEPPISQVGNVDTASELEKGVSEAAVLKPSEELPAEATSSVEPEKDSGSAAEAPR.

The region spanning 1 to 139 (MDAVNAFNQE…PLLDMAAGTS (139 aa)) is the CID domain. Lysine 49 carries the N6-acetyllysine modification. Disordered stretches follow at residues 145-179 (AENV…AVPQ), 235-254 (KTTP…PEQK), 269-331 (DEPE…QQPA), and 424-502 (VKRH…KPET). Serine 154 bears the Phosphoserine mark. Composition is skewed to low complexity over residues 283-292 (TAVTTTAPAA) and 299-310 (TATVPAAAAPAA). Residues 424–433 (VKRHMSDNRK) show a composition bias toward basic and acidic residues. Residues 434–475 (SRSRSASRSPKRRRSRSGSRSRRSRHRRSRSRSRDRRRHSPR) show a composition bias toward basic residues. Over residues 477–492 (RSQERRDREKERERRQ) the composition is skewed to basic and acidic residues. Residues 508–582 (TTLWVGQLDK…KSIKIAWALN (75 aa)) form the RRM domain. Disordered stretches follow at residues 629 to 661 (DWKG…IPKP) and 879 to 1147 (RPMP…EAPR). The residue at position 656 (serine 656) is a Phosphoserine. Residues 879 to 913 (RPMPPHMMHRGPPPGPGGFAMPPPHGMKGPFPPHG) show a composition bias toward pro residues. The span at 941 to 965 (QQPPQQPQQQPQPQAPQQPQQQQQQ) shows a compositional bias: low complexity. Residues 966 to 977 (QPPPSQQPPPTQ) show a composition bias toward pro residues. Serine 1004 carries the post-translational modification Phosphoserine. Over residues 1009-1085 (VENDRERYGN…RGKEKPEVTD (77 aa)) the composition is skewed to basic and acidic residues.

As to quaternary structure, interacts with POLR2A; via C-terminal heptapeptide repeat domain (CTD) phosphorylated at 'Ser-2' and 'Ser-5'.

Its subcellular location is the nucleus. Functionally, anti-terminator protein required to prevent early mRNA termination during transcription. Together with SCAF8, acts by suppressing the use of early, alternative poly(A) sites, thereby preventing the accumulation of non-functional truncated proteins. Mechanistically, associates with the phosphorylated C-terminal heptapeptide repeat domain (CTD) of the largest RNA polymerase II subunit (POLR2A), and subsequently binds nascent RNA upstream of early polyadenylation sites to prevent premature mRNA transcript cleavage and polyadenylation. Independently of SCAF8, also acts as a suppressor of transcriptional readthrough. In Homo sapiens (Human), this protein is SR-related and CTD-associated factor 4.